The following is a 390-amino-acid chain: Oxygen-dependent coproporphyrinogen-III oxidase (390 aa).

The interval valine 131 to lysine 140 is important for dimerization. Residue serine 181 coordinates substrate. Histidine 195 (proton donor) is an active-site residue. Residues asparagine 197–arginine 199 and glycine 348–serine 353 contribute to the substrate site. The important for dimerization stretch occupies residues tyrosine 329–glutamate 365.

The protein belongs to the aerobic coproporphyrinogen-III oxidase family. Homodimer.

It carries out the reaction coproporphyrinogen III + O2 + 2 H(+) = protoporphyrinogen IX + 2 CO2 + 2 H2O. Its pathway is porphyrin-containing compound metabolism; protoporphyrin-IX biosynthesis; protoporphyrinogen-IX from coproporphyrinogen-III (O2 route): step 1/1. Involved in the heme biosynthesis. Catalyzes the aerobic oxidative decarboxylation of propionate groups of rings A and B of coproporphyrinogen-III to yield the vinyl groups in protoporphyrinogen-IX. The protein is Oxygen-dependent coproporphyrinogen-III oxidase (Coprox) of Drosophila melanogaster (Fruit fly).